The following is a 448-amino-acid chain: Phosphoglucosamine mutase (448 aa).

The Phosphoserine intermediate role is filled by Ser-100. Mg(2+)-binding residues include Ser-100, Asp-240, Asp-242, and Asp-244. Ser-100 is modified (phosphoserine).

This sequence belongs to the phosphohexose mutase family. Mg(2+) is required as a cofactor. In terms of processing, activated by phosphorylation.

The enzyme catalyses alpha-D-glucosamine 1-phosphate = D-glucosamine 6-phosphate. In terms of biological role, catalyzes the conversion of glucosamine-6-phosphate to glucosamine-1-phosphate. The protein is Phosphoglucosamine mutase of Clostridium perfringens (strain ATCC 13124 / DSM 756 / JCM 1290 / NCIMB 6125 / NCTC 8237 / Type A).